A 293-amino-acid polypeptide reads, in one-letter code: uncharacterized protein (293 aa).

Disordered regions lie at residues 121-154 (NLNFDPHQMSKPSYHHHSHSHSHHSHSHSHSQNS) and 254-274 (DILQTVPPSPTPTPPPPPQQQ). The segment covering 133 to 149 (SYHHHSHSHSHHSHSHS) has biased composition (basic residues). A compositionally biased stretch (pro residues) spans 260–272 (PPSPTPTPPPPPQ).

This is an uncharacterized protein from Dictyostelium discoideum (Social amoeba).